We begin with the raw amino-acid sequence, 193 residues long: Holliday junction branch migration complex subunit RuvA (193 aa).

The tract at residues 1-64 (MIGRIAGILL…EDAHLLYGFL (64 aa)) is domain I. The interval 65 to 139 (TPQERTTFRE…GKLGADLGAL (75 aa)) is domain II. The interval 139 to 143 (LAGAA) is flexible linker. A domain III region spans residues 144–193 (SASDHATDILNALLALGYSEKEGLAAIKNVPAGTGVSEGIKLALKALSKA).

Belongs to the RuvA family. In terms of assembly, homotetramer. Forms an RuvA(8)-RuvB(12)-Holliday junction (HJ) complex. HJ DNA is sandwiched between 2 RuvA tetramers; dsDNA enters through RuvA and exits via RuvB. An RuvB hexamer assembles on each DNA strand where it exits the tetramer. Each RuvB hexamer is contacted by two RuvA subunits (via domain III) on 2 adjacent RuvB subunits; this complex drives branch migration. In the full resolvosome a probable DNA-RuvA(4)-RuvB(12)-RuvC(2) complex forms which resolves the HJ.

The protein resides in the cytoplasm. Functionally, the RuvA-RuvB-RuvC complex processes Holliday junction (HJ) DNA during genetic recombination and DNA repair, while the RuvA-RuvB complex plays an important role in the rescue of blocked DNA replication forks via replication fork reversal (RFR). RuvA specifically binds to HJ cruciform DNA, conferring on it an open structure. The RuvB hexamer acts as an ATP-dependent pump, pulling dsDNA into and through the RuvAB complex. HJ branch migration allows RuvC to scan DNA until it finds its consensus sequence, where it cleaves and resolves the cruciform DNA. This is Holliday junction branch migration complex subunit RuvA from Burkholderia cenocepacia (strain HI2424).